Here is a 314-residue protein sequence, read N- to C-terminus: Aspartate carbamoyltransferase catalytic subunit (314 aa).

R58 and T59 together coordinate carbamoyl phosphate. K86 lines the L-aspartate pocket. Residues R108, H136, and Q139 each coordinate carbamoyl phosphate. 2 residues coordinate L-aspartate: R169 and R223. 2 residues coordinate carbamoyl phosphate: G264 and P265.

Belongs to the aspartate/ornithine carbamoyltransferase superfamily. ATCase family. In terms of assembly, heterododecamer (2C3:3R2) of six catalytic PyrB chains organized as two trimers (C3), and six regulatory PyrI chains organized as three dimers (R2).

It catalyses the reaction carbamoyl phosphate + L-aspartate = N-carbamoyl-L-aspartate + phosphate + H(+). It functions in the pathway pyrimidine metabolism; UMP biosynthesis via de novo pathway; (S)-dihydroorotate from bicarbonate: step 2/3. Its function is as follows. Catalyzes the condensation of carbamoyl phosphate and aspartate to form carbamoyl aspartate and inorganic phosphate, the committed step in the de novo pyrimidine nucleotide biosynthesis pathway. This is Aspartate carbamoyltransferase catalytic subunit from Opitutus terrae (strain DSM 11246 / JCM 15787 / PB90-1).